A 619-amino-acid chain; its full sequence is DNA mismatch repair protein MutL (619 aa).

Belongs to the DNA mismatch repair MutL/HexB family.

Functionally, this protein is involved in the repair of mismatches in DNA. It is required for dam-dependent methyl-directed DNA mismatch repair. May act as a 'molecular matchmaker', a protein that promotes the formation of a stable complex between two or more DNA-binding proteins in an ATP-dependent manner without itself being part of a final effector complex. The sequence is that of DNA mismatch repair protein MutL from Shewanella frigidimarina (strain NCIMB 400).